Here is an 867-residue protein sequence, read N- to C-terminus: DNA endonuclease RBBP8 (867 aa).

An essential for binding to the MRN complex and for RPA focus formation on DNA damage region spans residues glutamate 25 to leucine 48. Coiled coils occupy residues leucine 38–leucine 87 and isoleucine 120–leucine 141. Disordered stretches follow at residues leucine 141 to proline 171 and arginine 448 to leucine 486. Positions glutamate 154–valine 166 are enriched in acidic residues. A PXDLS motif motif is present at residues proline 489–serine 493. The interval serine 508–histidine 531 is damage-recruitment motif. Phosphothreonine occurs at positions 817 and 829. Residues serine 843 to threonine 867 are disordered.

This sequence belongs to the COM1/SAE2/CtIP family. Homotetramer; formed by antiparallel association of helical extensions protruding from the N-termini of two parallel coiled-coil dimers. Interacts with the MRN complex; the interaction links DNA sensing to resection. Interacts with samhd1. Phosphorylation at Thr-817 and Thr-829 promote interaction with nbn and recruitment to double-strand breaks (DSBs).

It localises to the nucleus. The protein localises to the chromosome. Functionally, endonuclease that cooperates with the MRE11-RAD50-NBN (MRN) complex in DNA-end resection, the first step of double-strand break (DSB) repair through the homologous recombination (HR) pathway. Functions downstream of the MRN complex and ATM, promotes ATR activation and its recruitment to DSBs in the S/G2 phase facilitating the generation of ssDNA. Specifically promotes the endonuclease activity of the MRN complex to clear DNA ends containing protein adducts: recruited to DSBs by nbn following phosphorylation, and promotes the endonuclease of mre11 to clear protein-DNA adducts and generate clean double-strand break ends. The chain is DNA endonuclease RBBP8 (rbbp8) from Xenopus tropicalis (Western clawed frog).